A 407-amino-acid chain; its full sequence is MVASAAARPLVTVQGLDGDMSTDQSTTVTLPDVMTAPVRPDIVNFVHAQISNNSRQPYAVSKKAGHQTSAESWGTGRAVSRIPRVPGGGTHRAGQAAFGNMCRGGRMFAPTKIWRRWHRRVNVNMKRHAIVSAIAATAVPALVMARGHKIENVPEMPLVVSDSAEAVEKTSAAIKVLKQIGAYDDAEKAKNSIGIRPGKGKMRNRRYISRKGPLVVFGTEGAKIVKAFRNLPGVELCHVERLNLLKLAPGGHLGRFVIWTKSAFEKLESIYGSFEKPSEKKKGYVLPRAKMVNADLARIINSDEVQSVVNPIKDGSKRAVLKKNPLKNLNVMFKLNPYAKTAKRMSLLAEASRVKAKKEKLEKKRKVVTKEEAQAIKAAGKAWYQTMISDSDYTEFDNFTKWLGASQ.

The segment at 57–96 is disordered; sequence PYAVSKKAGHQTSAESWGTGRAVSRIPRVPGGGTHRAGQA.

This sequence belongs to the universal ribosomal protein uL4 family.

The chain is Large ribosomal subunit protein uL4y (RPL4D) from Arabidopsis thaliana (Mouse-ear cress).